We begin with the raw amino-acid sequence, 318 residues long: Curved DNA-binding protein (318 aa).

Residues 5-69 (DYYKILGVEP…QKRAEFDEIR (65 aa)) form the J domain. Residues 111-130 (GGGNPFGGARQQQRSAGRRG) are disordered.

The protein resides in the cytoplasm. Its subcellular location is the nucleoid. Functionally, DNA-binding protein that preferentially recognizes a curved DNA sequence. It is probably a functional analog of DnaJ; displays overlapping activities with DnaJ, but functions under different conditions, probably acting as a molecular chaperone in an adaptive response to environmental stresses other than heat shock. Lacks autonomous chaperone activity; binds native substrates and targets them for recognition by DnaK. Its activity is inhibited by the binding of CbpM. In Pseudomonas putida (strain GB-1), this protein is Curved DNA-binding protein.